Here is a 35-residue protein sequence, read N- to C-terminus: Coatomer subunit alpha (35 aa).

As to quaternary structure, oligomeric complex that consists of at least the alpha, beta, beta', gamma, delta, epsilon and zeta subunits. Interacts with SCYL1. Interacts with JAGN1. Interacts with TMEM41B. Interacts with SVEP1. Probably interacts with PEX11A. In terms of tissue distribution, gastric, duodenal and jejunal mucosa. Circulates in the blood. Seems to be confined to specific endocrine cells.

In terms of biological role, xenin stimulates exocrine pancreatic secretion. It inhibits pentagastrin-stimulated secretion of acid, to induce exocrine pancreatic secretion and to affect small and large intestinal motility. In the gut, xenin interacts with the neurotensin receptor. In Canis lupus familiaris (Dog), this protein is Coatomer subunit alpha (COPA).